The following is a 128-amino-acid chain: Protein 2B* (128 aa).

2 disordered regions span residues 1-27 (PFMF…NPTA) and 92-128 (RDDN…RNSS). Over residues 18-27 (SVINGSNPTA) the composition is skewed to polar residues. Residues 111-128 (IDGRRDYKPDKSVRRNSS) show a composition bias toward basic and acidic residues.

Belongs to the encephalomyocarditis virus protein 2B* family.

This Aotus trivirgatus (Three-striped night monkey) protein is Protein 2B*.